The sequence spans 302 residues: MDQERLTHLKQLEAESIHIIREVAAEFDNPVMMYSIGKDSSVMLHLARKAFYPGKIPFPLLHVDTDWKFREMIEFRDRTAEKYGFDLLVHKNPEGIEMGCSPFVHGSSKHTDIMKTQGLKQALNKYGFDAAFGGARRDEEKSRAKERVYSFRDKNHTWDPKNQRPELWHTYNGQVNKGESIRVFPLSNWTELDIWQYIYLESIDIVPLYLSDKRPVVERDGMLIMVDDDRMELQEGEVIEEKSVRFRTLGCYPLTGAVESEANTLTGIIEEMLVATSSERQGRAIDHDQSGSMELKKRQGYF.

The interval 280 to 302 (RQGRAIDHDQSGSMELKKRQGYF) is disordered.

It belongs to the PAPS reductase family. CysD subfamily. As to quaternary structure, heterodimer composed of CysD, the smaller subunit, and CysN.

The enzyme catalyses sulfate + ATP + H(+) = adenosine 5'-phosphosulfate + diphosphate. It participates in sulfur metabolism; hydrogen sulfide biosynthesis; sulfite from sulfate: step 1/3. Its function is as follows. With CysN forms the ATP sulfurylase (ATPS) that catalyzes the adenylation of sulfate producing adenosine 5'-phosphosulfate (APS) and diphosphate, the first enzymatic step in sulfur assimilation pathway. APS synthesis involves the formation of a high-energy phosphoric-sulfuric acid anhydride bond driven by GTP hydrolysis by CysN coupled to ATP hydrolysis by CysD. In Vibrio atlanticus (strain LGP32) (Vibrio splendidus (strain Mel32)), this protein is Sulfate adenylyltransferase subunit 2.